Here is a 160-residue protein sequence, read N- to C-terminus: Transcription antitermination protein NusB (160 aa).

Belongs to the NusB family.

Its function is as follows. Involved in transcription antitermination. Required for transcription of ribosomal RNA (rRNA) genes. Binds specifically to the boxA antiterminator sequence of the ribosomal RNA (rrn) operons. The protein is Transcription antitermination protein NusB of Mycolicibacterium smegmatis (strain ATCC 700084 / mc(2)155) (Mycobacterium smegmatis).